We begin with the raw amino-acid sequence, 185 residues long: Ribosome-recycling factor (185 aa).

Residues 143 to 163 (EKEKLISEDDNKKGMDDIQKE) are disordered.

The protein belongs to the RRF family.

The protein localises to the cytoplasm. Functionally, responsible for the release of ribosomes from messenger RNA at the termination of protein biosynthesis. May increase the efficiency of translation by recycling ribosomes from one round of translation to another. This is Ribosome-recycling factor from Syntrophomonas wolfei subsp. wolfei (strain DSM 2245B / Goettingen).